Consider the following 128-residue polypeptide: Flagellar hook-basal body complex protein FliE (128 aa).

A disordered region spans residues 1-60 (MRPVASFRPPPTFSALQGGASSQATKTAGIDQRGTNQAFSLLDPQSTQSNSTDSSFGEMG). A compositionally biased stretch (polar residues) spans 33–55 (RGTNQAFSLLDPQSTQSNSTDSS).

It belongs to the FliE family.

It localises to the bacterial flagellum basal body. The protein is Flagellar hook-basal body complex protein FliE of Rhodopirellula baltica (strain DSM 10527 / NCIMB 13988 / SH1).